The following is a 341-amino-acid chain: NADH-quinone oxidoreductase subunit H (341 aa).

Helical transmembrane passes span 6–26 (LIVS…LMAY), 76–96 (LVFL…AAVI), 118–138 (VAVL…ILGG), 157–177 (VISY…LSGS), 198–218 (LPNW…IAAV), 252–272 (FLAE…LFLG), 278–298 (FADG…FYVW), and 313–333 (GLAW…TGLV).

This sequence belongs to the complex I subunit 1 family. NDH-1 is composed of 14 different subunits. Subunits NuoA, H, J, K, L, M, N constitute the membrane sector of the complex.

It is found in the cell membrane. The enzyme catalyses a quinone + NADH + 5 H(+)(in) = a quinol + NAD(+) + 4 H(+)(out). In terms of biological role, NDH-1 shuttles electrons from NADH, via FMN and iron-sulfur (Fe-S) centers, to quinones in the respiratory chain. The immediate electron acceptor for the enzyme in this species is believed to be ubiquinone. Couples the redox reaction to proton translocation (for every two electrons transferred, four hydrogen ions are translocated across the cytoplasmic membrane), and thus conserves the redox energy in a proton gradient. This subunit may bind ubiquinone. This chain is NADH-quinone oxidoreductase subunit H, found in Thermomicrobium roseum (strain ATCC 27502 / DSM 5159 / P-2).